The following is a 207-amino-acid chain: Large ribosomal subunit protein uL3 (207 aa).

The protein belongs to the universal ribosomal protein uL3 family. As to quaternary structure, part of the 50S ribosomal subunit. Forms a cluster with proteins L14 and L19.

Functionally, one of the primary rRNA binding proteins, it binds directly near the 3'-end of the 23S rRNA, where it nucleates assembly of the 50S subunit. This chain is Large ribosomal subunit protein uL3, found in Desulforapulum autotrophicum (strain ATCC 43914 / DSM 3382 / VKM B-1955 / HRM2) (Desulfobacterium autotrophicum).